Consider the following 611-residue polypeptide: Putative type II restriction enzyme HgiDII (611 aa).

Over residues 355-364 (YPSNPKKEEV) the composition is skewed to basic and acidic residues. Positions 355–434 (YPSNPKKEEV…PEPSPPPKQE (80 aa)) are disordered. Over residues 381–409 (TNASSDSSTATENASSDSSTATENASSET) the composition is skewed to low complexity. A run of 2 repeats spans residues 382-392 (NASSDSSTATE) and 393-403 (NASSDSSTATE). Residues 382–403 (NASSDSSTATENASSDSSTATE) are 2.5 X 11 AA tandem repeats. A 3; truncated repeat occupies 404 to 409 (NASSET). The segment covering 410-425 (NDGEVEDNSFFDDDIP) has biased composition (acidic residues).

It carries out the reaction Endonucleolytic cleavage of DNA to give specific double-stranded fragments with terminal 5'-phosphates.. Its function is as follows. According to REBASE this is a P subtype restriction enzyme that recognizes the double-stranded sequence 5'-GTCGAC-3' and cleaves after G-1. No restriction activity was detected upon overexpressing this protein in E.coli. The chain is Putative type II restriction enzyme HgiDII from Herpetosiphon aurantiacus (Herpetosiphon giganteus).